We begin with the raw amino-acid sequence, 277 residues long: Undecaprenyl-diphosphatase (277 aa).

Transmembrane regions (helical) follow at residues 3 to 23 (IVLL…EFLP), 43 to 63 (VGKV…ILVY), 85 to 105 (LNVL…GKAI), 109 to 129 (LFTP…ILWA), 189 to 209 (TDFS…YSLF), 218 to 238 (ADLP…WLCI), and 249 to 269 (SFVG…ATAW).

The protein belongs to the UppP family.

It is found in the cell inner membrane. It carries out the reaction di-trans,octa-cis-undecaprenyl diphosphate + H2O = di-trans,octa-cis-undecaprenyl phosphate + phosphate + H(+). Functionally, catalyzes the dephosphorylation of undecaprenyl diphosphate (UPP). Confers resistance to bacitracin. The polypeptide is Undecaprenyl-diphosphatase (Albidiferax ferrireducens (strain ATCC BAA-621 / DSM 15236 / T118) (Rhodoferax ferrireducens)).